Consider the following 143-residue polypeptide: Large ribosomal subunit protein uL13 (143 aa).

The protein belongs to the universal ribosomal protein uL13 family. As to quaternary structure, part of the 50S ribosomal subunit.

Its function is as follows. This protein is one of the early assembly proteins of the 50S ribosomal subunit, although it is not seen to bind rRNA by itself. It is important during the early stages of 50S assembly. The protein is Large ribosomal subunit protein uL13 of Prochlorococcus marinus (strain MIT 9301).